Reading from the N-terminus, the 398-residue chain is Arginine biosynthesis bifunctional protein ArgJ (398 aa).

Substrate-binding residues include Thr148, Lys174, Thr185, Glu271, Asn393, and Thr398. Thr185 acts as the Nucleophile in catalysis.

This sequence belongs to the ArgJ family. In terms of assembly, heterotetramer of two alpha and two beta chains.

It localises to the cytoplasm. The enzyme catalyses N(2)-acetyl-L-ornithine + L-glutamate = N-acetyl-L-glutamate + L-ornithine. It carries out the reaction L-glutamate + acetyl-CoA = N-acetyl-L-glutamate + CoA + H(+). Its pathway is amino-acid biosynthesis; L-arginine biosynthesis; L-ornithine and N-acetyl-L-glutamate from L-glutamate and N(2)-acetyl-L-ornithine (cyclic): step 1/1. It functions in the pathway amino-acid biosynthesis; L-arginine biosynthesis; N(2)-acetyl-L-ornithine from L-glutamate: step 1/4. Functionally, catalyzes two activities which are involved in the cyclic version of arginine biosynthesis: the synthesis of N-acetylglutamate from glutamate and acetyl-CoA as the acetyl donor, and of ornithine by transacetylation between N(2)-acetylornithine and glutamate. The polypeptide is Arginine biosynthesis bifunctional protein ArgJ (Listeria monocytogenes serovar 1/2a (strain ATCC BAA-679 / EGD-e)).